A 169-amino-acid polypeptide reads, in one-letter code: Peptide methionine sulfoxide reductase MsrA (169 aa).

The active site involves Cys-10.

This sequence belongs to the MsrA Met sulfoxide reductase family.

It carries out the reaction L-methionyl-[protein] + [thioredoxin]-disulfide + H2O = L-methionyl-(S)-S-oxide-[protein] + [thioredoxin]-dithiol. The enzyme catalyses [thioredoxin]-disulfide + L-methionine + H2O = L-methionine (S)-S-oxide + [thioredoxin]-dithiol. Has an important function as a repair enzyme for proteins that have been inactivated by oxidation. Catalyzes the reversible oxidation-reduction of methionine sulfoxide in proteins to methionine. The sequence is that of Peptide methionine sulfoxide reductase MsrA from Streptococcus agalactiae serotype III (strain NEM316).